The primary structure comprises 118 residues: Large ribosomal subunit protein bL20 (118 aa).

The protein belongs to the bacterial ribosomal protein bL20 family.

Its function is as follows. Binds directly to 23S ribosomal RNA and is necessary for the in vitro assembly process of the 50S ribosomal subunit. It is not involved in the protein synthesizing functions of that subunit. The polypeptide is Large ribosomal subunit protein bL20 (Methylibium petroleiphilum (strain ATCC BAA-1232 / LMG 22953 / PM1)).